We begin with the raw amino-acid sequence, 211 residues long: Small ribosomal subunit protein uS3 (211 aa).

One can recognise a KH type-2 domain in the interval 38 to 106; sequence LRNFLKKRLY…EVYLNIQEVR (69 aa).

The protein belongs to the universal ribosomal protein uS3 family. As to quaternary structure, part of the 30S ribosomal subunit. Forms a tight complex with proteins S10 and S14.

Its function is as follows. Binds the lower part of the 30S subunit head. Binds mRNA in the 70S ribosome, positioning it for translation. This is Small ribosomal subunit protein uS3 from Citrifermentans bemidjiense (strain ATCC BAA-1014 / DSM 16622 / JCM 12645 / Bem) (Geobacter bemidjiensis).